The chain runs to 190 residues: Threonylcarbamoyl-AMP synthase (190 aa).

One can recognise a YrdC-like domain in the interval 7-190; that stretch reads LSSLIKCIRK…IVNGKLIRYV (184 aa).

Belongs to the SUA5 family. TsaC subfamily.

The protein resides in the cytoplasm. The catalysed reaction is L-threonine + hydrogencarbonate + ATP = L-threonylcarbamoyladenylate + diphosphate + H2O. Its function is as follows. Required for the formation of a threonylcarbamoyl group on adenosine at position 37 (t(6)A37) in tRNAs that read codons beginning with adenine. Catalyzes the conversion of L-threonine, HCO(3)(-)/CO(2) and ATP to give threonylcarbamoyl-AMP (TC-AMP) as the acyladenylate intermediate, with the release of diphosphate. This Buchnera aphidicola subsp. Schizaphis graminum (strain Sg) protein is Threonylcarbamoyl-AMP synthase.